Reading from the N-terminus, the 301-residue chain is MTSTSQFKQLERLGNGTYATVYKGLNKTTGLYVALKEVKLDSEEGTPSTAIREISLMKELKHENIVRLYDVIHTENKLTLVFEFMDNDLKKFMDSRLDREMPRGLELSLVKYFQWQLLQGVAFCHENRILHRDLKPQNLLINNKGQLKLGDFGLARAFGIPVNTFSSEVVTLWYRAPDVLMGSRTYCTSIDIWSCGCILAEMIMGKALFPGTNDDEQLKLIFETMGTPTEQTWVGVSQLPKYNPQIPLYPNKDIKQLLQATTKEQISDVLVNLIQGLLQLNPSMRLSAQQALSHPLFEEYH.

The 291-residue stretch at 7–297 (FKQLERLGNG…AQQALSHPLF (291 aa)) folds into the Protein kinase domain. ATP-binding positions include 13 to 21 (LGNGTYATV) and lysine 36. Residue aspartate 133 is the Proton acceptor of the active site.

It belongs to the protein kinase superfamily. CMGC Ser/Thr protein kinase family. CDC2/CDKX subfamily. As to quaternary structure, interacts with a number of cyclins.

It carries out the reaction L-seryl-[protein] + ATP = O-phospho-L-seryl-[protein] + ADP + H(+). The catalysed reaction is L-threonyl-[protein] + ATP = O-phospho-L-threonyl-[protein] + ADP + H(+). Its function is as follows. When phosphate concentrations are high it phosphorylates the PHO4 transcription factor thus establishing repression. This chain is Negative regulator of the PHO system (PHO85), found in Eremothecium gossypii (strain ATCC 10895 / CBS 109.51 / FGSC 9923 / NRRL Y-1056) (Yeast).